Consider the following 414-residue polypeptide: Serine/threonine transporter SstT (414 aa).

Residues 2–15 (TTQHSPGLFRRLAH) are Cytoplasmic-facing. A helical membrane pass occupies residues 16–36 (GSLVKQILAGLILGILLAWIS). The Periplasmic segment spans residues 37–45 (KPAAEAVGL). Residues 46-66 (LGTLFVGALKAVAPILVLMLV) form a helical membrane-spanning segment. At 67 to 83 (MASIANHQHGQKTNIRP) the chain is on the cytoplasmic side. The helical transmembrane segment at 84 to 104 (ILFLYLLGTFSAALAAVIFSF) threads the bilayer. At 105-142 (AFPSTLHLSSSAGDISPPSGIVEVMRGLVMSMVSNPID) the chain is on the periplasmic side. The chain crosses the membrane as a helical span at residues 143-163 (ALLKGNYIGILVWAIGLGFAL). The Cytoplasmic segment spans residues 164-179 (RHGNETTKNLVNDMSN). Residues 180 to 200 (AVTFMVKLVIHFAPIGIFGLV) form a helical membrane-spanning segment. Residues 201–217 (SSTLATTGFSTLWGYAQ) are Periplasmic-facing. The helical transmembrane segment at 218–238 (LLVVLVGCMLLVALVVNPLLV) threads the bilayer. The Cytoplasmic portion of the chain corresponds to 239-299 (WWKIRRNPFP…VSIPLGATIN (61 aa)). Residues 300-320 (MAGAAITITVLTLAAVNTLGI) form a helical membrane-spanning segment. The Periplasmic portion of the chain corresponds to 321–331 (PVDLPTALLLS). The helical transmembrane segment at 332–352 (VVASLCACGASGVAGGSLLLI) threads the bilayer. At 353 to 414 (PLACNMFGIS…DRLANSALRN (62 aa)) the chain is on the cytoplasmic side.

It belongs to the dicarboxylate/amino acid:cation symporter (DAACS) (TC 2.A.23) family.

The protein localises to the cell inner membrane. It carries out the reaction L-serine(in) + Na(+)(in) = L-serine(out) + Na(+)(out). It catalyses the reaction L-threonine(in) + Na(+)(in) = L-threonine(out) + Na(+)(out). Its function is as follows. Involved in the import of serine and threonine into the cell, with the concomitant import of sodium (symport system). This is Serine/threonine transporter SstT from Escherichia coli (strain UTI89 / UPEC).